The chain runs to 154 residues: RING finger protein 11 (154 aa).

A compositionally biased stretch (polar residues) spans 1-12 (MGNCLKSPTSDD). The tract at residues 1–53 (MGNCLKSPTSDDISLLHESQSDRASFGEGTEPDQEPPPPYQEQVPVPVYHPTP) is disordered. G2 is lipidated: N-myristoyl glycine. The S-palmitoyl cysteine moiety is linked to residue C4. A phosphoserine mark is found at S14 and S25. A PPxY motif motif is present at residues 37–40 (PPPY). The span at 41–51 (QEQVPVPVYHP) shows a compositional bias: low complexity. The RING-type zinc finger occupies 99 to 140 (CVICMMDFVYGDPIRFLPCMHIYHLDCIDDWLMRSFTCPSCM). T135 is subject to Phosphothreonine; by PKB/AKT1.

In terms of assembly, interacts (when phosphorylated) with 14-3-3. Interacts with the E3 ubiquitin-ligases NEDD4, ITCH, SMURF2 and WWP1. Also interacts with the E2 ubiquitin-conjugating enzymes UBE2D1 and UBE2N, but neither with CDC34, nor with UBE2L3. Interacts with ZNF350, EPS15 and STAMBP. After TNF stimulation, interacts with TAX1BP1, TNFAIP3 and RIPK1; these interactions are transient and they are lost after 1 hour of stimulation with TNF. Interacts with GGA1. Ubiquitinated in the presence of ITCH, SMURF2 and UBE2D1, as well as WWP1. Post-translationally, phosphorylation by PKB/AKT1 may accelerate degradation by the proteasome. In terms of processing, acylation at both Gly-2 and Cys-4 is required for proper localization to the endosomes.

The protein localises to the early endosome. It localises to the recycling endosome. The protein resides in the cytoplasm. Its subcellular location is the nucleus. In terms of biological role, essential component of a ubiquitin-editing protein complex, comprising also TNFAIP3, ITCH and TAX1BP1, that ensures the transient nature of inflammatory signaling pathways. Promotes the association of TNFAIP3 to RIPK1 after TNF stimulation. TNFAIP3 deubiquitinates 'Lys-63' polyubiquitin chains on RIPK1 and catalyzes the formation of 'Lys-48'-polyubiquitin chains. This leads to RIPK1 proteasomal degradation and consequently termination of the TNF- or LPS-mediated activation of NF-kappa-B. Recruits STAMBP to the E3 ubiquitin-ligase SMURF2 for ubiquitination, leading to its degradation by the 26S proteasome. This is RING finger protein 11 (RNF11) from Bos taurus (Bovine).